The sequence spans 154 residues: MRKQIEIFTDGSCLGNPGVGGIGVVLRYKQHEKTLSKGYFQTTNNRMELRAVIEALNLLKEPCEIILHSDSQYMKNGITQWIFNWKKNNWRASTGKPVKNQDLWIALDSAIQPHTIHWRWVKGHSGHRENEMCDELAKQGAENPTLEDTGYRQD.

Residues 1 to 142 (MRKQIEIFTD…CDELAKQGAE (142 aa)) form the RNase H type-1 domain. 4 residues coordinate Mg(2+): Asp-10, Glu-48, Asp-70, and Asp-134.

The protein belongs to the RNase H family. Monomer. The cofactor is Mg(2+).

It is found in the cytoplasm. It catalyses the reaction Endonucleolytic cleavage to 5'-phosphomonoester.. Endonuclease that specifically degrades the RNA of RNA-DNA hybrids. This chain is Ribonuclease H, found in Actinobacillus succinogenes (strain ATCC 55618 / DSM 22257 / CCUG 43843 / 130Z).